Reading from the N-terminus, the 211-residue chain is MNASANLCAASDNDPQPGDQEAAHPVACAGDEPAAFLPHDLPIFLVGMMGAGKTTIGRGLARALRREFIDLDHELEARCGVRVPVIFEIEGEAGFRRREAAALQECTQRRQIILATGGGAVLAAENRQALRERGIVIYLRASVEELFRRTSRDRNRPLLATADPRATLRELMVAREPLYNEVADLVIDTGSMPIATLVKSLLPKLQAYEKK.

The segment at 1–23 (MNASANLCAASDNDPQPGDQEAA) is disordered. ATP is bound at residue 50 to 55 (GAGKTT). Thr54 provides a ligand contact to Mg(2+). Asp72, Arg96, and Gly118 together coordinate substrate. An ATP-binding site is contributed by Arg156. Arg175 contributes to the substrate binding site.

It belongs to the shikimate kinase family. Monomer. Mg(2+) is required as a cofactor.

The protein resides in the cytoplasm. It catalyses the reaction shikimate + ATP = 3-phosphoshikimate + ADP + H(+). Its pathway is metabolic intermediate biosynthesis; chorismate biosynthesis; chorismate from D-erythrose 4-phosphate and phosphoenolpyruvate: step 5/7. Its function is as follows. Catalyzes the specific phosphorylation of the 3-hydroxyl group of shikimic acid using ATP as a cosubstrate. In Bordetella bronchiseptica (strain ATCC BAA-588 / NCTC 13252 / RB50) (Alcaligenes bronchisepticus), this protein is Shikimate kinase.